Consider the following 233-residue polypeptide: Large ribosomal subunit protein uL1 (233 aa).

The protein belongs to the universal ribosomal protein uL1 family. In terms of assembly, part of the 50S ribosomal subunit.

Functionally, binds directly to 23S rRNA. The L1 stalk is quite mobile in the ribosome, and is involved in E site tRNA release. Its function is as follows. Protein L1 is also a translational repressor protein, it controls the translation of the L11 operon by binding to its mRNA. The sequence is that of Large ribosomal subunit protein uL1 from Deinococcus geothermalis (strain DSM 11300 / CIP 105573 / AG-3a).